Here is a 427-residue protein sequence, read N- to C-terminus: 3-phosphoshikimate 1-carboxyvinyltransferase (427 aa).

3-phosphoshikimate contacts are provided by Lys-20, Ser-21, and Arg-25. Lys-20 contributes to the phosphoenolpyruvate binding site. The phosphoenolpyruvate site is built by Gly-92 and Arg-120. 4 residues coordinate 3-phosphoshikimate: Ser-166, Gln-168, Asp-312, and Lys-339. Gln-168 lines the phosphoenolpyruvate pocket. Catalysis depends on Asp-312, which acts as the Proton acceptor. Phosphoenolpyruvate is bound by residues Arg-343 and Arg-385.

It belongs to the EPSP synthase family. Monomer.

The protein localises to the cytoplasm. The enzyme catalyses 3-phosphoshikimate + phosphoenolpyruvate = 5-O-(1-carboxyvinyl)-3-phosphoshikimate + phosphate. It functions in the pathway metabolic intermediate biosynthesis; chorismate biosynthesis; chorismate from D-erythrose 4-phosphate and phosphoenolpyruvate: step 6/7. Its function is as follows. Catalyzes the transfer of the enolpyruvyl moiety of phosphoenolpyruvate (PEP) to the 5-hydroxyl of shikimate-3-phosphate (S3P) to produce enolpyruvyl shikimate-3-phosphate and inorganic phosphate. This chain is 3-phosphoshikimate 1-carboxyvinyltransferase, found in Streptococcus agalactiae serotype III (strain NEM316).